The primary structure comprises 179 residues: MSRIGKRPIPIPAKVSVAIDGRLVSVKGPKGELSRELPSGVVVTQEDGNIIVSRADESRLARQRHGLSRTLVANLVEGVDSGFQKRLEIIGVGYRAQVQGTTLILNVGYSNPVQIEPPEGIQFVVENNTNVVVSGISKEVVGNTAARIRAVRPPEPYKGKGIRYAGEVVLRKAGKTGKK.

It belongs to the universal ribosomal protein uL6 family. As to quaternary structure, part of the 50S ribosomal subunit.

Its function is as follows. This protein binds to the 23S rRNA, and is important in its secondary structure. It is located near the subunit interface in the base of the L7/L12 stalk, and near the tRNA binding site of the peptidyltransferase center. The protein is Large ribosomal subunit protein uL6 of Synechococcus elongatus (strain ATCC 33912 / PCC 7942 / FACHB-805) (Anacystis nidulans R2).